A 209-amino-acid chain; its full sequence is Uracil phosphoribosyltransferase (209 aa).

5-phospho-alpha-D-ribose 1-diphosphate is bound by residues R79, R104, and 131–139 (DPMLATGHT). Uracil contacts are provided by residues I194 and 199-201 (GDA). D200 contributes to the 5-phospho-alpha-D-ribose 1-diphosphate binding site.

The protein belongs to the UPRTase family. Mg(2+) serves as cofactor.

It catalyses the reaction UMP + diphosphate = 5-phospho-alpha-D-ribose 1-diphosphate + uracil. It functions in the pathway pyrimidine metabolism; UMP biosynthesis via salvage pathway; UMP from uracil: step 1/1. Its activity is regulated as follows. Allosterically activated by GTP. In terms of biological role, catalyzes the conversion of uracil and 5-phospho-alpha-D-ribose 1-diphosphate (PRPP) to UMP and diphosphate. In Caulobacter sp. (strain K31), this protein is Uracil phosphoribosyltransferase.